The following is a 342-amino-acid chain: N-acetyl-gamma-glutamyl-phosphate reductase (342 aa).

The active site involves C146.

This sequence belongs to the NAGSA dehydrogenase family. Type 1 subfamily.

The protein localises to the cytoplasm. The enzyme catalyses N-acetyl-L-glutamate 5-semialdehyde + phosphate + NADP(+) = N-acetyl-L-glutamyl 5-phosphate + NADPH + H(+). The protein operates within amino-acid biosynthesis; L-arginine biosynthesis; N(2)-acetyl-L-ornithine from L-glutamate: step 3/4. In terms of biological role, catalyzes the NADPH-dependent reduction of N-acetyl-5-glutamyl phosphate to yield N-acetyl-L-glutamate 5-semialdehyde. The polypeptide is N-acetyl-gamma-glutamyl-phosphate reductase (Streptomyces avermitilis (strain ATCC 31267 / DSM 46492 / JCM 5070 / NBRC 14893 / NCIMB 12804 / NRRL 8165 / MA-4680)).